Here is a 242-residue protein sequence, read N- to C-terminus: Ribosomal RNA small subunit methyltransferase G (242 aa).

S-adenosyl-L-methionine is bound by residues Gly-79, Phe-84, 130–131, and Arg-150; that span reads AE.

It belongs to the methyltransferase superfamily. RNA methyltransferase RsmG family.

It is found in the cytoplasm. Specifically methylates the N7 position of a guanine in 16S rRNA. This chain is Ribosomal RNA small subunit methyltransferase G, found in Levilactobacillus brevis (strain ATCC 367 / BCRC 12310 / CIP 105137 / JCM 1170 / LMG 11437 / NCIMB 947 / NCTC 947) (Lactobacillus brevis).